Reading from the N-terminus, the 400-residue chain is Nicotinate phosphoribosyltransferase (400 aa).

At His220 the chain carries Phosphohistidine; by autocatalysis.

It belongs to the NAPRTase family. Post-translationally, transiently phosphorylated on a His residue during the reaction cycle. Phosphorylation strongly increases the affinity for substrates and increases the rate of nicotinate D-ribonucleotide production. Dephosphorylation regenerates the low-affinity form of the enzyme, leading to product release.

It carries out the reaction nicotinate + 5-phospho-alpha-D-ribose 1-diphosphate + ATP + H2O = nicotinate beta-D-ribonucleotide + ADP + phosphate + diphosphate. It functions in the pathway cofactor biosynthesis; NAD(+) biosynthesis; nicotinate D-ribonucleotide from nicotinate: step 1/1. Catalyzes the synthesis of beta-nicotinate D-ribonucleotide from nicotinate and 5-phospho-D-ribose 1-phosphate at the expense of ATP. This chain is Nicotinate phosphoribosyltransferase, found in Salmonella schwarzengrund (strain CVM19633).